Reading from the N-terminus, the 257-residue chain is Acetylglutamate kinase (257 aa).

Substrate contacts are provided by residues 43 to 44 (GG), R65, and N157. ATP-binding positions include 180–185 (DVSGIL) and 208–210 (IIT).

It belongs to the acetylglutamate kinase family. ArgB subfamily. In terms of assembly, homodimer.

It is found in the cytoplasm. It carries out the reaction N-acetyl-L-glutamate + ATP = N-acetyl-L-glutamyl 5-phosphate + ADP. It participates in amino-acid biosynthesis; L-arginine biosynthesis; N(2)-acetyl-L-ornithine from L-glutamate: step 2/4. Its function is as follows. Catalyzes the ATP-dependent phosphorylation of N-acetyl-L-glutamate. The sequence is that of Acetylglutamate kinase from Serratia proteamaculans (strain 568).